The sequence spans 90 residues: Protein RL8A (90 aa).

The helical transmembrane segment at 15–34 (WTCEGLLLLLGLLVLFFHHH) threads the bilayer. A disordered region spans residues 55–90 (HESGWYSSDDDGDRDGDEETGESHNRNSVGLSAVFS). A compositionally biased stretch (acidic residues) spans 62 to 74 (SDDDGDRDGDEET). Over residues 80–90 (RNSVGLSAVFS) the composition is skewed to polar residues.

The protein localises to the host membrane. In Homo sapiens (Human), this protein is Protein RL8A (RL8A).